The primary structure comprises 90 residues: Large ribosomal subunit protein bL27 (90 aa).

Residues 1-22 (MAHKKAGGSTRNGRDSNPKMLG) are disordered.

The protein belongs to the bacterial ribosomal protein bL27 family.

This chain is Large ribosomal subunit protein bL27, found in Coxiella burnetii (strain Dugway 5J108-111).